The primary structure comprises 405 residues: MTSADKNNPDTSTAQGSSADLGVTVPKGFSAAAVTAGIKPSGKSDMALIRNDGPDDIAAAMFTRNQVTAAPVRYTKANNDGTFRAVVVNSGNANACNGAQGDKDARATAEKAAELLGCQPGDVAVCSTGLIGDVLPMDKVLSGVDELAGKLDQSITAGNDAARAIMTTDLVAKEAVYHGDGWSIGAMGKGVGMMAPSLATMLVFITTDAHLPSADMAHEALAGATPTTFDCIDIDGATSTNDTVLLMASGASGITPDAEEFNAAIHQVCLDIAMQLQADAEGVTKRVSITVGGAETDADAQTAARVIGRDNLFKCAMFGSDPNWGRVLAAVGMAPVKMNPEAISVSFNGHPVCINSTGAPGARTVDLSGADIAVEVDLGVGEGRATVWTTDLSYSYVEINSEYST.

A compositionally biased stretch (polar residues) spans 1-18; the sequence is MTSADKNNPDTSTAQGSS. The tract at residues 1–21 is disordered; sequence MTSADKNNPDTSTAQGSSADL. Substrate contacts are provided by Thr-167, Lys-189, Thr-200, Glu-281, Asn-400, and Thr-405. Thr-200 functions as the Nucleophile in the catalytic mechanism.

This sequence belongs to the ArgJ family. As to quaternary structure, heterotetramer of two alpha and two beta chains.

It localises to the cytoplasm. It catalyses the reaction N(2)-acetyl-L-ornithine + L-glutamate = N-acetyl-L-glutamate + L-ornithine. It carries out the reaction L-glutamate + acetyl-CoA = N-acetyl-L-glutamate + CoA + H(+). It participates in amino-acid biosynthesis; L-arginine biosynthesis; L-ornithine and N-acetyl-L-glutamate from L-glutamate and N(2)-acetyl-L-ornithine (cyclic): step 1/1. The protein operates within amino-acid biosynthesis; L-arginine biosynthesis; N(2)-acetyl-L-ornithine from L-glutamate: step 1/4. In terms of biological role, catalyzes two activities which are involved in the cyclic version of arginine biosynthesis: the synthesis of N-acetylglutamate from glutamate and acetyl-CoA as the acetyl donor, and of ornithine by transacetylation between N(2)-acetylornithine and glutamate. This Corynebacterium jeikeium (strain K411) protein is Arginine biosynthesis bifunctional protein ArgJ.